The sequence spans 216 residues: Somatotropin (216 aa).

The first 26 residues, 1-26, serve as a signal peptide directing secretion; the sequence is MATDSRTSWLLTVSLLCLLWPQEASA. Histidine 45 is a binding site for Zn(2+). A disulfide bridge links cysteine 78 with cysteine 189. At serine 131 the chain carries Phosphoserine. Glutamate 198 is a Zn(2+) binding site. Cysteine 206 and cysteine 214 are oxidised to a cystine.

Belongs to the somatotropin/prolactin family.

It localises to the secreted. Functionally, plays an important role in growth control. Its major role in stimulating body growth is to stimulate the liver and other tissues to secrete IGF1. It stimulates both the differentiation and proliferation of myoblasts. It also stimulates amino acid uptake and protein synthesis in muscle and other tissues. The protein is Somatotropin (Gh1) of Mus musculus (Mouse).